Reading from the N-terminus, the 20-residue chain is Styelin-A (20 aa).

As to expression, hemocytes and pharyngeal tissues.

The protein localises to the secreted. In terms of biological role, bactericidal against several Gram-positive and Gram-negative bacteria. The polypeptide is Styelin-A (Styela clava (Sea squirt)).